Consider the following 933-residue polypeptide: Protein FAM83G (933 aa).

Disordered stretches follow at residues Lys-339–Lys-375, Thr-450–Val-716, Trp-870–Pro-899, and Thr-911–Gln-933. Residues Cys-452–Lys-466 are compositionally biased toward polar residues. Composition is skewed to basic and acidic residues over residues Val-467 to Gly-480 and Ser-503 to Pro-514. Composition is skewed to polar residues over residues Ser-515–Asp-531 and Ser-538–Ala-580. Residues Lys-590–Pro-609 show a composition bias toward basic and acidic residues. A compositionally biased stretch (polar residues) spans Lys-651 to Ser-660. Residues Ser-702–Val-716 are compositionally biased toward low complexity. Positions Ala-875–Pro-886 are enriched in polar residues.

This sequence belongs to the FAM83 family. Interacts with SMAD1 (via MH2 domain); in a SMAD4-independent manner.

Its subcellular location is the cytoplasm. It localises to the cytosol. The protein localises to the nucleus. In terms of biological role, substrate for type I BMP receptor kinase involved in regulation of some target genes of the BMP signaling pathway. May also play a role in other signaling pathways. The polypeptide is Protein FAM83G (fam83g) (Xenopus laevis (African clawed frog)).